Reading from the N-terminus, the 331-residue chain is Ketol-acid reductoisomerase (NADP(+)) (331 aa).

Positions 2–182 constitute a KARI N-terminal Rossmann domain; that stretch reads AQLFYDSDAD…GGTRAGILET (181 aa). Residues 25 to 28, Ser-51, Ser-53, and 83 to 86 contribute to the NADP(+) site; these read YGSQ and DEFQ. Residue His-108 is part of the active site. NADP(+) is bound at residue Gly-134. The KARI C-terminal knotted domain maps to 183–328; it reads NFKEETETDL…KGLRAMFSWL (146 aa). Asp-191, Glu-195, Glu-227, and Glu-231 together coordinate Mg(2+). Ser-252 lines the substrate pocket.

This sequence belongs to the ketol-acid reductoisomerase family. Mg(2+) is required as a cofactor.

It carries out the reaction (2R)-2,3-dihydroxy-3-methylbutanoate + NADP(+) = (2S)-2-acetolactate + NADPH + H(+). It catalyses the reaction (2R,3R)-2,3-dihydroxy-3-methylpentanoate + NADP(+) = (S)-2-ethyl-2-hydroxy-3-oxobutanoate + NADPH + H(+). It participates in amino-acid biosynthesis; L-isoleucine biosynthesis; L-isoleucine from 2-oxobutanoate: step 2/4. The protein operates within amino-acid biosynthesis; L-valine biosynthesis; L-valine from pyruvate: step 2/4. In terms of biological role, involved in the biosynthesis of branched-chain amino acids (BCAA). Catalyzes an alkyl-migration followed by a ketol-acid reduction of (S)-2-acetolactate (S2AL) to yield (R)-2,3-dihydroxy-isovalerate. In the isomerase reaction, S2AL is rearranged via a Mg-dependent methyl migration to produce 3-hydroxy-3-methyl-2-ketobutyrate (HMKB). In the reductase reaction, this 2-ketoacid undergoes a metal-dependent reduction by NADPH to yield (R)-2,3-dihydroxy-isovalerate. The polypeptide is Ketol-acid reductoisomerase (NADP(+)) (Prochlorococcus marinus (strain MIT 9211)).